Consider the following 492-residue polypeptide: Adenosylhomocysteinase (492 aa).

Residues Thr68, Asp153, and Glu215 each coordinate substrate. 216-218 (TTT) is an NAD(+) binding site. Positions 245 and 249 each coordinate substrate. NAD(+) contacts are provided by residues Asn250, 279–284 (GYGDVG), Glu302, Asn337, 358–360 (IGH), and Asn406.

Belongs to the adenosylhomocysteinase family. NAD(+) is required as a cofactor.

It localises to the cytoplasm. The catalysed reaction is S-adenosyl-L-homocysteine + H2O = L-homocysteine + adenosine. Its pathway is amino-acid biosynthesis; L-homocysteine biosynthesis; L-homocysteine from S-adenosyl-L-homocysteine: step 1/1. May play a key role in the regulation of the intracellular concentration of adenosylhomocysteine. The polypeptide is Adenosylhomocysteinase (Mycobacterium leprae (strain Br4923)).